A 98-amino-acid chain; its full sequence is NADH-ubiquinone oxidoreductase chain 4L (98 aa).

3 consecutive transmembrane segments (helical) span residues 1-21, 29-49, and 61-81; these read MSMV…GLLM, SLLC…MVVL, and IILL…LVMV.

This sequence belongs to the complex I subunit 4L family. In terms of assembly, core subunit of respiratory chain NADH dehydrogenase (Complex I) which is composed of 45 different subunits.

Its subcellular location is the mitochondrion inner membrane. It carries out the reaction a ubiquinone + NADH + 5 H(+)(in) = a ubiquinol + NAD(+) + 4 H(+)(out). Its function is as follows. Core subunit of the mitochondrial membrane respiratory chain NADH dehydrogenase (Complex I) which catalyzes electron transfer from NADH through the respiratory chain, using ubiquinone as an electron acceptor. Part of the enzyme membrane arm which is embedded in the lipid bilayer and involved in proton translocation. The protein is NADH-ubiquinone oxidoreductase chain 4L (MT-ND4L) of Acinonyx jubatus (Cheetah).